The chain runs to 215 residues: Oligoribonuclease (215 aa).

Positions 5–170 constitute an Exonuclease domain; it reads LVWIDCEMTG…ADIHESIREL (166 aa). The active site involves tyrosine 127. Residues 196-215 are disordered; it reads LDEGKDAPGPSDSASAPPTG. The span at 202 to 215 shows a compositional bias: low complexity; it reads APGPSDSASAPPTG.

This sequence belongs to the oligoribonuclease family.

The protein localises to the cytoplasm. Its function is as follows. 3'-to-5' exoribonuclease specific for small oligoribonucleotides. The chain is Oligoribonuclease from Mycobacterium avium (strain 104).